A 200-amino-acid chain; its full sequence is MASKIETLKANLEAALGARAVSLVEAVGELTLVVKASDYLEVAKQLRDDRSLGFEQLIDLCGIDYQTYGDGAYDGPRFAAVLHLLSVANNWRLRVRVFAPDDDLPIVPSVVDIWNSANWYEREAFDLYGIVFEGHPDLRRILTDYGFIGHPFRKDFPVSGYVEMRYDPEEKRVVYQPVTIEPREITPRVIREDRYGGLKH.

Belongs to the complex I 30 kDa subunit family. As to quaternary structure, NDH-1 is composed of 14 different subunits. Subunits NuoB, C, D, E, F, and G constitute the peripheral sector of the complex.

It is found in the cell inner membrane. It catalyses the reaction a quinone + NADH + 5 H(+)(in) = a quinol + NAD(+) + 4 H(+)(out). Functionally, NDH-1 shuttles electrons from NADH, via FMN and iron-sulfur (Fe-S) centers, to quinones in the respiratory chain. The immediate electron acceptor for the enzyme in this species is believed to be ubiquinone. Couples the redox reaction to proton translocation (for every two electrons transferred, four hydrogen ions are translocated across the cytoplasmic membrane), and thus conserves the redox energy in a proton gradient. The chain is NADH-quinone oxidoreductase subunit C from Burkholderia thailandensis (strain ATCC 700388 / DSM 13276 / CCUG 48851 / CIP 106301 / E264).